The chain runs to 3579 residues: Protocadherin-like wing polarity protein stan (3579 aa).

The signal sequence occupies residues 1-29 (MQTREFPQRPLGLLLVLLVVLLQSSLIKS). Topologically, residues 30-2816 (YLIIVHEDTP…EPSLLVQITS (2787 aa)) are extracellular. Residues Asn46, Asn179, and Asn340 are each glycosylated (N-linked (GlcNAc...) asparagine). Cadherin domains follow at residues 360–464 (EQAL…SPTF), 465–581 (EAEQ…YPQF), 582–689 (SERT…APRF), 690–794 (YTSQ…DPAF), 795–897 (NPKY…APIF), 898–1007 (ENAP…APAF), 1008–1113 (KSPL…PPTF), and 1114–1220 (ASDK…APVL). Asn671 is a glycosylation site (N-linked (GlcNAc...) asparagine). The N-linked (GlcNAc...) asparagine glycan is linked to Asn886. Asn1269, Asn1374, and Asn1441 each carry an N-linked (GlcNAc...) asparagine glycan. The region spanning 1482-1518 (EVDLCYSDPCQNGGTCVRREGGYTCVCPSTHTGQNCE) is the EGF-like 1; calcium-binding domain. 3 disulfide bridges follow: Cys1486–Cys1497, Cys1491–Cys1506, and Cys1508–Cys1517. The 198-residue stretch at 1556 to 1753 (LRARAFGRNS…VADNGTLAGC (198 aa)) folds into the Laminin G-like 1 domain. N-linked (GlcNAc...) asparagine glycosylation is found at Asn1650, Asn1678, and Asn1747. Intrachain disulfides connect Cys1727–Cys1753, Cys1760–Cys1771, Cys1765–Cys1780, and Cys1782–Cys1791. Residues 1756–1792 (KAPLCQSEPCFNGGTCREGWGTYSCECPEGYAGNSCQ) enclose the EGF-like 2; calcium-binding domain. A Laminin G-like 2 domain is found at 1796-1963 (PAPWRFSGDG…TIRENVEDGC (168 aa)). N-linked (GlcNAc...) asparagine glycosylation is present at Asn1843. 4 cysteine pairs are disulfide-bonded: Cys1937-Cys1963, Cys1969-Cys1979, Cys1973-Cys1988, and Cys1990-Cys1999. In terms of domain architecture, EGF-like 3; calcium-binding spans 1965–2000 (SRAQCPDHCPNHSSCQSSWDLSTCECDSGYVGTDCA). N-linked (GlcNAc...) asparagine glycosylation is present at Asn1975. Asn2016, Asn2028, Asn2071, and Asn2088 each carry an N-linked (GlcNAc...) asparagine glycan. 4 disulfide bridges follow: Cys2092-Cys2095, Cys2097-Cys2114, Cys2116-Cys2125, and Cys2128-Cys2140. The Laminin EGF-like domain maps to 2095–2142 (CDCYSIGSFSGACNPLTGQCECREGVIGRRCDSCSNPYAEVTLSGCEV). Asn2196 and Asn2320 each carry an N-linked (GlcNAc...) asparagine glycan. Residues 2553–2562 (QETQRLEIPS) show a composition bias toward basic and acidic residues. Disordered stretches follow at residues 2553–2582 (QETQ…STEQ), 2610–2635 (HEIP…EREP), and 2654–2684 (VISP…GENE). Positions 2567–2579 (SSSSPSSSSSSGS) are enriched in low complexity. Residues 2653-2803 (EVISPDSPEM…AVIVDVIDPE (151 aa)) form the GAIN-B domain. 2 disulfides stabilise this stretch: Cys2747-Cys2785 and Cys2762-Cys2787. Residues 2747–2803 (CVRWNSFTNQWTRLGCQTEIPDFDGDFNPAAQQAILVNCSCTHISSYAVIVDVIDPE) form a GPS region. Residue Asn2784 is glycosylated (N-linked (GlcNAc...) asparagine). The helical transmembrane segment at 2817–2837 (YSAFLVSLPLLLGVLLALALL) threads the bilayer. The Cytoplasmic portion of the chain corresponds to 2838–2845 (RGQQTNSN). The chain crosses the membrane as a helical span at residues 2846-2866 (TIHQNIVLCVFCAELLFFVGM). The Extracellular segment spans residues 2867 to 2883 (QSRRQLLESEFPCKLTA). Residues 2884-2904 (ICLHYFWLAAFAWTTVDCVHL) form a helical membrane-spanning segment. Over 2905 to 2919 (YRMLTEMRDINHGPM) the chain is Cytoplasmic. A helical membrane pass occupies residues 2920-2940 (GFYFAMGYGAPAIVVGLSVGV). At 2941-2959 (RAHEYGNSLFCWLSVYEPV) the chain is on the extracellular side. Residues 2960 to 2980 (VWWLVGPIAGMSVVNLLILFV) traverse the membrane as a helical segment. Residues 2981-3000 (SVKAAFTLKDHVLGFGNLRT) are Cytoplasmic-facing. Residues 3001-3021 (LLWLSVVSLPLMGVMWVLAVL) form a helical membrane-spanning segment. Residues 3022–3031 (AASEHSQLLS) lie on the Extracellular side of the membrane. A helical membrane pass occupies residues 3032-3052 (LLLSGVVLLHALFCLIGYCII). Residues 3053-3579 (NKRVRENLQR…RNIDDDETTV (527 aa)) are Cytoplasmic-facing. Disordered regions lie at residues 3111–3225 (GISA…TPAY), 3343–3377 (LYGR…SGSQ), 3458–3486 (YHQQ…YHFP), and 3499–3579 (LSHT…ETTV). Over residues 3113-3128 (SASSTTSRSTAKTSSS) the composition is skewed to low complexity. Residues 3167-3191 (RGGEEKPSRRQRKDSDSGSETDGRS) show a composition bias toward basic and acidic residues. 2 positions are modified to phosphoserine: Ser3199 and Ser3200. Over residues 3208-3223 (ARSSGTHRSTAVSSTP) the composition is skewed to polar residues. Over residues 3343 to 3352 (LYGRRGEYPD) the composition is skewed to basic and acidic residues. Residues 3459 to 3468 (HQQQQQQQQH) are compositionally biased toward low complexity. Over residues 3469–3482 (HLQDRLSEGSDKNG) the composition is skewed to basic and acidic residues. Residues 3501-3513 (HTQPPSLHGSQLM) show a composition bias toward polar residues.

Belongs to the G-protein coupled receptor 2 family. In terms of assembly, interacts with ATP6AP2 (via N-terminus). In the pupal wing, expressed at relatively even levels in all regions. Abundant in 6-9 hours embryos. Expressed at higher levels in pupae than larvae.

The protein resides in the cell membrane. Its subcellular location is the apical cell membrane. Functionally, involved in the fz signaling pathway that controls wing tissue polarity. Also mediates homophilic cell adhesion. May play a role in initiating prehair morphogenesis. May play a critical role in tissue polarity and in formation of normal dendrite fields. During planar cell polarity, stabilizes asymmetric PCP domains together with ATP6AP2. The polypeptide is Protocadherin-like wing polarity protein stan (stan) (Drosophila melanogaster (Fruit fly)).